The sequence spans 471 residues: Meiosis-specific with OB domain-containing protein (471 aa).

A DNA-binding region (OB) is located at residues 167–272 (IINVLAAVKS…EANILLNFIR (106 aa)).

It belongs to the MEIOB family. In terms of assembly, component of a multiprotein complex with RPA2 and SPATA22. Interacts with SPATA22. Interacts with the complex BRME1:HSF2BP:BRCA2.

It is found in the cytoplasm. The protein resides in the nucleus. The protein localises to the chromosome. Its function is as follows. Single-stranded DNA-binding protein required for homologous recombination in meiosis I. Required for double strand breaks (DSBs) repair and crossover formation and promotion of faithful and complete synapsis. Not required for the initial loading of recombinases but required to maintain a proper number of RAD51 and DMC1 foci after the zygotene stage. May act by ensuring the stabilization of recombinases, which is required for successful homology search and meiotic recombination. Displays Single-stranded DNA 3'-5' exonuclease activity in vitro. The protein is Meiosis-specific with OB domain-containing protein (MEIOB) of Macaca fascicularis (Crab-eating macaque).